A 107-amino-acid polypeptide reads, in one-letter code: RNA silencing suppressor (107 aa).

The interval 46 to 49 is basic; that stretch reads RRRR. The C4-type zinc-finger motif lies at 56 to 78; that stretch reads CHRCYRVYPPLFPEISRCDNRTC.

This sequence belongs to the carlaviruses nucleic acid-binding protein family.

Its function is as follows. Suppressor of viral-induced RNA silencing. The potential mechanism of action is based on sequestering siRNAs. The chain is RNA silencing suppressor from Chrysanthemum morifolium (Florist's daisy).